Here is a 140-residue protein sequence, read N- to C-terminus: Large ribosomal subunit protein uL11 (140 aa).

This sequence belongs to the universal ribosomal protein uL11 family. As to quaternary structure, part of the ribosomal stalk of the 50S ribosomal subunit. Interacts with L10 and the large rRNA to form the base of the stalk. L10 forms an elongated spine to which L12 dimers bind in a sequential fashion forming a multimeric L10(L12)X complex. Post-translationally, one or more lysine residues are methylated.

In terms of biological role, forms part of the ribosomal stalk which helps the ribosome interact with GTP-bound translation factors. In Nitratidesulfovibrio vulgaris (strain DSM 19637 / Miyazaki F) (Desulfovibrio vulgaris), this protein is Large ribosomal subunit protein uL11.